We begin with the raw amino-acid sequence, 378 residues long: 3-dehydroquinate synthase (378 aa).

NAD(+) contacts are provided by residues 111–115, 135–136, lysine 148, and lysine 157; these read GVIGD and TS. Zn(2+) is bound by residues glutamate 190, histidine 252, and histidine 271.

This sequence belongs to the sugar phosphate cyclases superfamily. Dehydroquinate synthase family. The cofactor is NAD(+). It depends on Co(2+) as a cofactor. Zn(2+) is required as a cofactor.

It localises to the cytoplasm. It carries out the reaction 7-phospho-2-dehydro-3-deoxy-D-arabino-heptonate = 3-dehydroquinate + phosphate. The protein operates within metabolic intermediate biosynthesis; chorismate biosynthesis; chorismate from D-erythrose 4-phosphate and phosphoenolpyruvate: step 2/7. In terms of biological role, catalyzes the conversion of 3-deoxy-D-arabino-heptulosonate 7-phosphate (DAHP) to dehydroquinate (DHQ). The protein is 3-dehydroquinate synthase of Mesorhizobium japonicum (strain LMG 29417 / CECT 9101 / MAFF 303099) (Mesorhizobium loti (strain MAFF 303099)).